We begin with the raw amino-acid sequence, 392 residues long: Outer membrane protein assembly factor BamB (392 aa).

The first 19 residues, 1-19 (MQLRKLLLPGLLSVTLLSG), serve as a signal peptide directing secretion. C20 is lipidated: N-palmitoyl cysteine. C20 carries S-diacylglycerol cysteine lipidation.

It belongs to the BamB family. In terms of assembly, part of the Bam complex, which is composed of the outer membrane protein BamA, and four lipoproteins BamB, BamC, BamD and BamE. Monomer. Interacts directly with BamA. The Bam complex has the shape of a hat, with the BamA beta-barrel crown in the outer membrane and the periplasmic brim formed by the BamA POTRA domains and the 4 lipoproteins.

The protein localises to the cell outer membrane. Functionally, part of the outer membrane protein assembly complex (Bam), which is involved in assembly and insertion of beta-barrel proteins into the outer membrane. Nonessential member of the complex, which may orient the flexible periplasmic domain of BamA for interaction with other Bam components, chaperones and nascent outer membrane proteins. Efficient substrate folding and insertion into the outer membrane requires all 5 subunits. A lateral gate may open between the first and last strands of the BamA beta-barrel that allows substrate to insert into the outer membrane; comparison of the structures of complete and nearly complete Bam complexes show there is considerable movement of all 5 proteins. The polypeptide is Outer membrane protein assembly factor BamB (Escherichia coli (strain K12)).